The primary structure comprises 475 residues: ATP synthase subunit beta, chloroplastic (475 aa).

155–162 (GGAGVGKT) serves as a coordination point for ATP.

Belongs to the ATPase alpha/beta chains family. F-type ATPases have 2 components, CF(1) - the catalytic core - and CF(0) - the membrane proton channel. CF(1) has five subunits: alpha(3), beta(3), gamma(1), delta(1), epsilon(1). CF(0) has four main subunits: a(1), b(1), b'(1) and c(9-12).

It localises to the plastid. It is found in the chloroplast thylakoid membrane. It catalyses the reaction ATP + H2O + 4 H(+)(in) = ADP + phosphate + 5 H(+)(out). Functionally, produces ATP from ADP in the presence of a proton gradient across the membrane. The catalytic sites are hosted primarily by the beta subunits. The chain is ATP synthase subunit beta, chloroplastic from Porphyra purpurea (Red seaweed).